Reading from the N-terminus, the 377-residue chain is Sterol 24-C-methyltransferase (377 aa).

This sequence belongs to the class I-like SAM-binding methyltransferase superfamily. Erg6/SMT family.

It catalyses the reaction lanosterol + S-adenosyl-L-methionine = eburicol + S-adenosyl-L-homocysteine + H(+). The enzyme catalyses eburicol + S-adenosyl-L-methionine = (24Z)-ethylidenelanosterol + S-adenosyl-L-homocysteine + H(+). The protein operates within steroid metabolism. Catalyzes the transfer of 2 methyl groups from 2 S-adenosyl-methionine molecules to the C-24 of lanosterol, producing first eburicol (24-methylenelanosterol) from lanosterol and then pneumocysterol (24Z-ethylidenelanosterol) from eburicol. This Pneumocystis carinii (strain B80) (Rat pneumocystis pneumonia agent) protein is Sterol 24-C-methyltransferase (erg6).